The chain runs to 125 residues: Allatostatin (125 aa).

The N-terminal stretch at 1-26 (MKTSAYNVYLGVVAAMLALLFVTINA) is a signal peptide. A propeptide spanning residues 27-106 (APMEADDETA…SRLARQWRAD (80 aa)) is cleaved from the precursor. Glutamine 109 carries the post-translational modification Pyrrolidone carboxylic acid.

It belongs to the allatostatin family.

Its subcellular location is the secreted. Strongly inhibits juvenile hormone biosynthesis in vitro by the corpora allata from fifth-stadium larvae and adult females. The sequence is that of Allatostatin from Spodoptera frugiperda (Fall armyworm).